Consider the following 126-residue polypeptide: Holo-[acyl-carrier-protein] synthase (126 aa).

Asp9 and Glu58 together coordinate Mg(2+).

This sequence belongs to the P-Pant transferase superfamily. AcpS family. Mg(2+) serves as cofactor.

It localises to the cytoplasm. It carries out the reaction apo-[ACP] + CoA = holo-[ACP] + adenosine 3',5'-bisphosphate + H(+). Its function is as follows. Transfers the 4'-phosphopantetheine moiety from coenzyme A to a Ser of acyl-carrier-protein. In Shewanella frigidimarina (strain NCIMB 400), this protein is Holo-[acyl-carrier-protein] synthase.